The sequence spans 618 residues: Polyamine transporter TPO5 (618 aa).

Residues 1-60 are Cytoplasmic-facing; it reads MPEYTLLADNIRENIVHFDPNGLFDNLHTIVHEDDSQENEEAEHFNYDQVLDKSLLSRGS. The chain crosses the membrane as a helical span at residues 61–84; the sequence is IVGLGLGLMSPVLGMCTSMAIGLI. The Extracellular segment spans residues 85–90; the sequence is NGGPLT. Residues 91–110 form a helical membrane-spanning segment; the sequence is IMLGFLISGVCIWFSSLSLG. The Cytoplasmic segment spans residues 111-131; the sequence is EIVSKFPMELHVGSAMLAPEK. Residues 132 to 148 traverse the membrane as a helical segment; it reads LKLVCSWYTGWLMLIGN. The Extracellular portion of the chain corresponds to 149–154; that stretch reads WTMSTS. The helical transmembrane segment at 155-171 threads the bilayer; sequence ITFAGAQLTISLILMTN. Topologically, residues 172–179 are cytoplasmic; the sequence is SNLISEAH. The helical transmembrane segment at 180 to 200 threads the bilayer; that stretch reads LIFYTVIVFYLVVTVVGLVNL. The Extracellular segment spans residues 201–211; the sequence is KFARFIETINK. A helical transmembrane segment spans residues 212–231; it reads VCVYWIIYAIIFIDILLLVF. Residues 232 to 297 are Cytoplasmic-facing; the sequence is HKGKFRSLKY…EKDIPRGMSN (66 aa). A helical transmembrane segment spans residues 298-317; sequence AVLLSAFSGVIFLIPIMLIL. The Extracellular segment spans residues 318 to 342; sequence PDNDLLFTNHKVLPIVNIFTKSTDS. A helical membrane pass occupies residues 343-367; sequence VVLSFFLVLLILGNLLFSGIGSITT. Topologically, residues 368-402 are cytoplasmic; the sequence is SSRAVYSFSRDQAIPYYDKWTYVEPDSQSKVPKNS. The helical transmembrane segment at 403-419 threads the bilayer; that stretch reads VVLSMIISYFLGLLALI. Residues 420-425 lie on the Extracellular side of the membrane; sequence STAAFN. The helical transmembrane segment at 426–449 threads the bilayer; that stretch reads AFIGAAVLCLCSATFIPLVLVLFT. Residues 450–464 are Cytoplasmic-facing; the sequence is RRRAIRSAPVKIRYK. Residues 465–486 traverse the membrane as a helical segment; the sequence is FGWFINIVSIVWLLLSMVSVCL. Topologically, residues 487–498 are extracellular; the sequence is PTQVPVTFKTMN. The chain crosses the membrane as a helical span at residues 499 to 516; that stretch reads YALMVYVFCILVITGLYF. Residues 517–618 lie on the Cytoplasmic side of the membrane; that stretch reads KWGKYNFRLP…DLADDRRYDI (102 aa). A Phosphoserine modification is found at S569. The disordered stretch occupies residues 576 to 618; that stretch reads VHPKSSTENPFEENEENVITDYGDEHHTAEQEFDLADDRRYDI. A compositionally biased stretch (basic and acidic residues) spans 598 to 618; the sequence is GDEHHTAEQEFDLADDRRYDI.

The protein belongs to the amino acid-polyamine-organocation (APC) superfamily.

The protein resides in the golgi apparatus membrane. Required for polyamine transport. Transports putrescine effectively and spermidine less effectively. In Saccharomyces cerevisiae (strain ATCC 204508 / S288c) (Baker's yeast), this protein is Polyamine transporter TPO5 (TPO5).